The primary structure comprises 118 residues: uncharacterized protein (118 aa).

This is an uncharacterized protein from Saccharomyces cerevisiae (strain ATCC 204508 / S288c) (Baker's yeast).